The primary structure comprises 254 residues: Probable 2,4-dienoyl-CoA reductase [(2E)-enoyl-CoA-producing] (254 aa).

6 to 38 (VIITGGSSGMGKAMAKKQAELGWHVMVTGRNHE) lines the NADP(+) pocket. A substrate-binding site is contributed by T100. Catalysis depends on Y142, which acts as the Proton acceptor. Residue K157 participates in NAD(+) binding.

The protein belongs to the short-chain dehydrogenases/reductases (SDR) family. 2,4-dienoyl-CoA reductase subfamily.

It catalyses the reaction a 4,5-saturated-(2E)-enoyl-CoA + NADP(+) = a (2E,4E)-dienoyl-CoA + NADPH + H(+). The catalysed reaction is a (2E,4Z)-dienoyl-CoA + NADPH + H(+) = a 4,5-saturated-(2E)-enoyl-CoA + NADP(+). Its pathway is lipid metabolism; fatty acid beta-oxidation. In terms of biological role, auxiliary enzyme of beta-oxidation. It participates in the metabolism of unsaturated fatty enoyl-CoA esters having double bonds in both even- and odd-numbered positions. Catalyzes the NADP-dependent reduction of 2,4-dienoyl-CoA to yield trans-3-enoyl-CoA. This chain is Probable 2,4-dienoyl-CoA reductase [(2E)-enoyl-CoA-producing] (fadH), found in Bacillus subtilis (strain 168).